Here is a 20-residue protein sequence, read N- to C-terminus: Cytochrome c oxidase subunit 8B, mitochondrial (20 aa).

It belongs to the cytochrome c oxidase VIII family. Component of the cytochrome c oxidase (complex IV, CIV), a multisubunit enzyme composed of 14 subunits. The complex is composed of a catalytic core of 3 subunits MT-CO1, MT-CO2 and MT-CO3, encoded in the mitochondrial DNA, and 11 supernumerary subunits COX4I, COX5A, COX5B, COX6A, COX6B, COX6C, COX7A, COX7B, COX7C, COX8 and NDUFA4, which are encoded in the nuclear genome. The complex exists as a monomer or a dimer and forms supercomplexes (SCs) in the inner mitochondrial membrane with NADH-ubiquinone oxidoreductase (complex I, CI) and ubiquinol-cytochrome c oxidoreductase (cytochrome b-c1 complex, complex III, CIII), resulting in different assemblies (supercomplex SCI(1)III(2)IV(1) and megacomplex MCI(2)III(2)IV(2)).

Its subcellular location is the mitochondrion inner membrane. It functions in the pathway energy metabolism; oxidative phosphorylation. Its function is as follows. Component of the cytochrome c oxidase, the last enzyme in the mitochondrial electron transport chain which drives oxidative phosphorylation. The respiratory chain contains 3 multisubunit complexes succinate dehydrogenase (complex II, CII), ubiquinol-cytochrome c oxidoreductase (cytochrome b-c1 complex, complex III, CIII) and cytochrome c oxidase (complex IV, CIV), that cooperate to transfer electrons derived from NADH and succinate to molecular oxygen, creating an electrochemical gradient over the inner membrane that drives transmembrane transport and the ATP synthase. Cytochrome c oxidase is the component of the respiratory chain that catalyzes the reduction of oxygen to water. Electrons originating from reduced cytochrome c in the intermembrane space (IMS) are transferred via the dinuclear copper A center (CU(A)) of subunit 2 and heme A of subunit 1 to the active site in subunit 1, a binuclear center (BNC) formed by heme A3 and copper B (CU(B)). The BNC reduces molecular oxygen to 2 water molecules using 4 electrons from cytochrome c in the IMS and 4 protons from the mitochondrial matrix. The polypeptide is Cytochrome c oxidase subunit 8B, mitochondrial (Thunnus obesus (Bigeye tuna)).